A 370-amino-acid chain; its full sequence is Polygalacturonase 1 (370 aa).

The N-terminal stretch at 1-18 (MRTSILSMLALGAAAVSA) is a signal peptide. Cys36 and Cys51 are oxidised to a cystine. PbH1 repeat units follow at residues 163 to 194 (ADNLVLDHITIDNTDGDKTNGGHNTDAFDVGE), 195 to 216 (STYITISNANIKNQDDCLAINS), 217 to 237 (GENIIFTGGTCSGGHGLSIGS), 246 to 267 (VKNVTISDSTVSNSDNGIRIKT), and 275 to 297 (VADVTFSNIELSNIAKYGIVIEQ). Asp209 functions as the Proton donor in the catalytic mechanism. Cys211 and Cys227 are joined by a disulfide. His231 is an active-site residue. Asn248 carries N-linked (GlcNAc...) asparagine glycosylation. Cystine bridges form between Cys337–Cys342 and Cys361–Cys370.

Belongs to the glycosyl hydrolase 28 family.

Its subcellular location is the secreted. It catalyses the reaction (1,4-alpha-D-galacturonosyl)n+m + H2O = (1,4-alpha-D-galacturonosyl)n + (1,4-alpha-D-galacturonosyl)m.. This chain is Polygalacturonase 1 (PG1), found in Penicillium olsonii.